Consider the following 251-residue polypeptide: Anamorsin homolog (251 aa).

Residues 1–154 (MINFSNTLVI…AENPDFNKSD (154 aa)) are N-terminal SAM-like domain. Residues 155-167 (DDNNLVSSDEEIY) are linker. The [2Fe-2S] cluster site is built by C170, C181, C184, and C186. The segment at 170 to 186 (CEDKKKVVNRVCDNCTC) is fe-S binding site A. [4Fe-4S] cluster contacts are provided by C216, C219, C227, and C230. 2 consecutive short sequence motifs (cx2C motif) follow at residues 216–219 (CGNC) and 227–230 (CGSC). Positions 216 to 230 (CGNCYLGDAFRCGSC) are fe-S binding site B.

The protein belongs to the anamorsin family. As to quaternary structure, monomer. Requires [2Fe-2S] cluster as cofactor. [4Fe-4S] cluster is required as a cofactor.

Its subcellular location is the cytoplasm. The protein resides in the mitochondrion intermembrane space. Its function is as follows. Component of the cytosolic iron-sulfur (Fe-S) protein assembly (CIA) machinery. Required for the maturation of extramitochondrial Fe-S proteins. Part of an electron transfer chain functioning in an early step of cytosolic Fe-S biogenesis, facilitating the de novo assembly of a [4Fe-4S] cluster on the cytosolic Fe-S scaffold complex. Electrons are transferred from NADPH via a FAD- and FMN-containing diflavin oxidoreductase. Together with the diflavin oxidoreductase, also required for the assembly of the diferric tyrosyl radical cofactor of ribonucleotide reductase (RNR), probably by providing electrons for reduction during radical cofactor maturation in the catalytic small subunit. The sequence is that of Anamorsin homolog from Plasmodium yoelii yoelii.